Consider the following 494-residue polypeptide: Guanosine-5'-triphosphate,3'-diphosphate pyrophosphatase (494 aa).

It belongs to the GppA/Ppx family. GppA subfamily.

The enzyme catalyses guanosine 3'-diphosphate 5'-triphosphate + H2O = guanosine 3',5'-bis(diphosphate) + phosphate + H(+). It participates in purine metabolism; ppGpp biosynthesis; ppGpp from GTP: step 2/2. Its function is as follows. Catalyzes the conversion of pppGpp to ppGpp. Guanosine pentaphosphate (pppGpp) is a cytoplasmic signaling molecule which together with ppGpp controls the 'stringent response', an adaptive process that allows bacteria to respond to amino acid starvation, resulting in the coordinated regulation of numerous cellular activities. The polypeptide is Guanosine-5'-triphosphate,3'-diphosphate pyrophosphatase (Shigella flexneri serotype 5b (strain 8401)).